A 419-amino-acid polypeptide reads, in one-letter code: uncharacterized protein (419 aa).

The next 11 membrane-spanning stretches (helical) occupy residues 1–21 (MTTV…FLIL), 24–44 (VSPA…GGAD), 66–86 (ILAA…NSIT), 101–121 (ALAL…VAVI), 174–194 (SVMM…YFLA), 216–236 (NLPS…LLAL), 242–262 (IKVD…FCMG), 280–300 (PVAI…NSGL), 311–331 (SGLP…LATA), 349–369 (LELG…ATVF), and 396–416 (IPYE…IFGV).

This sequence belongs to the CitM (TC 2.A.11) transporter family.

It localises to the cell membrane. This is an uncharacterized protein from Haemophilus influenzae (strain ATCC 51907 / DSM 11121 / KW20 / Rd).